We begin with the raw amino-acid sequence, 300 residues long: Ribonuclease Z (300 aa).

H63, H65, D67, H68, H140, D207, and H265 together coordinate Zn(2+). Catalysis depends on D67, which acts as the Proton acceptor.

The protein belongs to the RNase Z family. Homodimer. The cofactor is Zn(2+).

It carries out the reaction Endonucleolytic cleavage of RNA, removing extra 3' nucleotides from tRNA precursor, generating 3' termini of tRNAs. A 3'-hydroxy group is left at the tRNA terminus and a 5'-phosphoryl group is left at the trailer molecule.. In terms of biological role, zinc phosphodiesterase, which displays some tRNA 3'-processing endonuclease activity. Probably involved in tRNA maturation, by removing a 3'-trailer from precursor tRNA. The protein is Ribonuclease Z of Ignicoccus hospitalis (strain KIN4/I / DSM 18386 / JCM 14125).